The chain runs to 534 residues: Zinc finger protein 397 (534 aa).

S31 carries the post-translational modification Phosphoserine. In terms of domain architecture, SCAN box spans 50–132 (RQQFRKFCYQ…TLLEDLEREF (83 aa)). Glycyl lysine isopeptide (Lys-Gly) (interchain with G-Cter in SUMO2) cross-links involve residues K55, K171, K202, and K252. Residues 197-242 (DISGEKSQRLSQEPSFGGFSEHKSSLEWQQGSAPGETLRRSPSQRA) form a disordered region. 9 consecutive C2H2-type zinc fingers follow at residues 285 to 307 (YRCD…QRIH), 313 to 335 (YKCN…QRIH), 341 to 363 (YECS…RKIH), 369 to 391 (CKCN…QRIH), 397 to 419 (YECN…QRIH), 425 to 447 (YECN…QRIH), 453 to 475 (YECN…QRIH), 481 to 503 (YQCN…QRIH), and 509 to 531 (YICS…QRVH).

The protein belongs to the krueppel C2H2-type zinc-finger protein family.

It is found in the nucleus. Functionally, DNA-dependent transcriptional repressor. In Bos taurus (Bovine), this protein is Zinc finger protein 397 (ZNF397).